A 173-amino-acid chain; its full sequence is Ribosome maturation factor RimM (173 aa).

In terms of domain architecture, PRC barrel spans 98–171 (DDQYYYDEII…LITIDALEGL (74 aa)).

This sequence belongs to the RimM family. In terms of assembly, binds ribosomal protein uS19.

Its subcellular location is the cytoplasm. An accessory protein needed during the final step in the assembly of 30S ribosomal subunit, possibly for assembly of the head region. Essential for efficient processing of 16S rRNA. May be needed both before and after RbfA during the maturation of 16S rRNA. It has affinity for free ribosomal 30S subunits but not for 70S ribosomes. This Leuconostoc mesenteroides subsp. mesenteroides (strain ATCC 8293 / DSM 20343 / BCRC 11652 / CCM 1803 / JCM 6124 / NCDO 523 / NBRC 100496 / NCIMB 8023 / NCTC 12954 / NRRL B-1118 / 37Y) protein is Ribosome maturation factor RimM.